The sequence spans 170 residues: Disulfide bond formation protein B (170 aa).

Over 1-14 the chain is Cytoplasmic; that stretch reads MNDSTLALRRERRL. Residues 15–31 form a helical membrane-spanning segment; it reads LMLLGWVCIALLAGALY. The Periplasmic segment spans residues 32 to 49; that stretch reads LQYVKNEDPCPLCIIQRY. An intrachain disulfide couples Cys-41 to Cys-44. A helical transmembrane segment spans residues 50-64; it reads FFAAIGIFAFLAAGI. At 65–71 the chain is on the cytoplasmic side; the sequence is RNWRVIW. A helical membrane pass occupies residues 72–89; the sequence is VFELLIAIAAAGGVGTAA. Over 90-144 the chain is Periplasmic; it reads RHLSIQMNPGFSCGFDTLQPIVDSLPPAQWFPGMFKVAGLCETVYPPIFGILLPG. Cys-102 and Cys-130 are disulfide-bonded. The helical transmembrane segment at 145-163 threads the bilayer; it reads WALIGFAVILVAVASSLWR. The Cytoplasmic portion of the chain corresponds to 164 to 170; the sequence is HRRKLAG.

Belongs to the DsbB family.

The protein resides in the cell inner membrane. Required for disulfide bond formation in some periplasmic proteins. Acts by oxidizing the DsbA protein. The chain is Disulfide bond formation protein B from Burkholderia ambifaria (strain ATCC BAA-244 / DSM 16087 / CCUG 44356 / LMG 19182 / AMMD) (Burkholderia cepacia (strain AMMD)).